We begin with the raw amino-acid sequence, 511 residues long: Kinesin-like protein 8 (511 aa).

The region spanning 5 to 356 (NVRVIVRVRP…LRYSEAARRI (352 aa)) is the Kinesin motor domain. Residue 107 to 114 (GQKGTGKT) coordinates ATP. Phosphoserine occurs at positions 278, 279, 284, and 456. The stretch at 373-489 (EGELDDILTT…KLVKSQLHDY (117 aa)) forms a coiled coil.

The protein belongs to the TRAFAC class myosin-kinesin ATPase superfamily. Kinesin family.

It localises to the cytoplasm. It is found in the cytoskeleton. The polypeptide is Kinesin-like protein 8 (klp8) (Schizosaccharomyces pombe (strain 972 / ATCC 24843) (Fission yeast)).